Consider the following 80-residue polypeptide: Putative membrane protein insertion efficiency factor (80 aa).

Belongs to the UPF0161 family.

The protein resides in the cell inner membrane. Could be involved in insertion of integral membrane proteins into the membrane. The chain is Putative membrane protein insertion efficiency factor from Syntrophobacter fumaroxidans (strain DSM 10017 / MPOB).